The chain runs to 338 residues: Putative peptide import ATP-binding protein BruAb2_0796 (338 aa).

One can recognise an ABC transporter domain in the interval 7-263 (LDIEGLRTVF…PRHPYTMGLL (257 aa)). Residue 43-50 (GESGSGKS) coordinates ATP.

It belongs to the ABC transporter superfamily. The complex is composed of two ATP-binding proteins (BruAb2_0796 and BruAb2_0797), two transmembrane proteins (BruAb2_0794) and a solute-binding protein (BruAb2_0792).

It localises to the cell inner membrane. In terms of biological role, probably part of an ABC transporter complex that could be involved in peptide import. Probably responsible for energy coupling to the transport system. This chain is Putative peptide import ATP-binding protein BruAb2_0796, found in Brucella abortus biovar 1 (strain 9-941).